A 248-amino-acid chain; its full sequence is Ribonuclease HII (248 aa).

An RNase H type-2 domain is found at 29–219 (DIVCGVDEAG…VREAHLRLGT (191 aa)). The a divalent metal cation site is built by D35, E36, and D128.

This sequence belongs to the RNase HII family. Mn(2+) serves as cofactor. Requires Mg(2+) as cofactor.

The protein resides in the cytoplasm. The catalysed reaction is Endonucleolytic cleavage to 5'-phosphomonoester.. Functionally, endonuclease that specifically degrades the RNA of RNA-DNA hybrids. The protein is Ribonuclease HII of Paraburkholderia xenovorans (strain LB400).